Consider the following 503-residue polypeptide: Asparagine--tRNA ligase (503 aa).

Belongs to the class-II aminoacyl-tRNA synthetase family. In terms of assembly, homodimer.

It is found in the cytoplasm. It catalyses the reaction tRNA(Asn) + L-asparagine + ATP = L-asparaginyl-tRNA(Asn) + AMP + diphosphate + H(+). This Aster yellows witches'-broom phytoplasma (strain AYWB) protein is Asparagine--tRNA ligase.